We begin with the raw amino-acid sequence, 711 residues long: Polyribonucleotide nucleotidyltransferase (711 aa).

Residues Asp-490 and Asp-496 each contribute to the Mg(2+) site. The region spanning 556–615 (PRIETMQVPTDKIREVIGSGGKVIREIVEVSGAKVDINDDGVIKIASANGEAIQKAYDMI) is the KH domain. One can recognise an S1 motif domain in the interval 625-693 (GAVYTGKVVK…DRGKVRLSMK (69 aa)).

This sequence belongs to the polyribonucleotide nucleotidyltransferase family. It depends on Mg(2+) as a cofactor.

Its subcellular location is the cytoplasm. The catalysed reaction is RNA(n+1) + phosphate = RNA(n) + a ribonucleoside 5'-diphosphate. Functionally, involved in mRNA degradation. Catalyzes the phosphorolysis of single-stranded polyribonucleotides processively in the 3'- to 5'-direction. In Ruegeria sp. (strain TM1040) (Silicibacter sp.), this protein is Polyribonucleotide nucleotidyltransferase.